An 83-amino-acid polypeptide reads, in one-letter code: Cell division topological specificity factor (83 aa).

It belongs to the MinE family.

In terms of biological role, prevents the cell division inhibition by proteins MinC and MinD at internal division sites while permitting inhibition at polar sites. This ensures cell division at the proper site by restricting the formation of a division septum at the midpoint of the long axis of the cell. The protein is Cell division topological specificity factor of Buchnera aphidicola subsp. Schizaphis graminum (strain Sg).